The sequence spans 249 residues: MWQLLPSTALLLVASARPQAADLPKAVVVSDPPGNRVLTLDSVTFTCQGANPSGNHSTRWLHNGTLISSQTSYFIRAASVENSGEYRCQTGLSELSDPVQLEVHVGWLLLQTPQRVFQEGEPIRLRCHSWKNKPVWNVQYFQNRRGKKFSYGNSEFYIPAARSEHNGSYFCRGLIGKRNESSEAVDIIIQGPPVPSTSALLPFWPHIPFAVVMALLFAVDTGLYFAMQRHLHNSKRAWENSKVSWKQDP.

A signal peptide spans 1 to 16 (MWQLLPSTALLLVASA). The Extracellular segment spans residues 17-198 (RPQAADLPKA…IQGPPVPSTS (182 aa)). 2 Ig-like C2-type domains span residues 24 to 104 (PKAV…LEVH) and 119 to 172 (EGEP…YFCR). 2 disulfide bridges follow: C47–C88 and C127–C171. N-linked (GlcNAc...) asparagine glycans are attached at residues N55, N63, N166, and N179. A helical membrane pass occupies residues 199-219 (ALLPFWPHIPFAVVMALLFAV). The Cytoplasmic portion of the chain corresponds to 220 to 249 (DTGLYFAMQRHLHNSKRAWENSKVSWKQDP).

As to quaternary structure, forms a heterooligomeric complex with ITAM-containing signaling subunits FCER1G. Interacts (via transmembrane domain) with signaling subunits; this interaction is a prerequisite for receptor complex expression on the cell surface and intracellular signal transduction. Binds the Fc region of antigen-complexed IgG.

It is found in the cell membrane. Functionally, receptor for the invariable Fc fragment of immunoglobulin gamma (IgG). Optimally activated upon binding of clustered antigen-IgG complexes displayed on cell surfaces, triggers lysis of antibody-coated cells, a process known as antibody-dependent cellular cytotoxicity (ADCC). Does not bind free monomeric IgG, thus avoiding inappropriate effector cell activation in the absence of antigenic trigger. Mediates IgG effector functions on natural killer (NK) cells. Binds antigen-IgG complexes generated upon infection and triggers NK cell-dependent cytokine production and degranulation to limit viral load and propagation. Fc-binding subunit that associates with FCER1G adapter to form functional signaling complexes. Following the engagement of antigen-IgG complexes, triggers phosphorylation of immunoreceptor tyrosine-based activation motif (ITAM)-containing adapter with subsequent activation of phosphatidylinositol 3-kinase signaling and sustained elevation of intracellular calcium that ultimately drive NK cell activation. Mediates enhanced ADCC in response to afucosylated IgGs. The polypeptide is Low affinity immunoglobulin gamma Fc region receptor III-A (Mustela putorius furo (European domestic ferret)).